The chain runs to 393 residues: METFLFTSESVNEGHPDKLCDQISDAVLDACLAQDPDSKVACETCSKTNMVMVFGEITTKANVDYEKIVRDTCRTIGFVSDDVGLDADNCKVLVNIEQQSPDIAQGVHGHFTKRPEEIGAGDQGHMFGYATDETPELMPLSHVLATKLGARLTEVRKDGTCPWLRPDGKTQVTVEYYNDKGAMVPVRVHTVLISTQHDETVTNDEIAADLKEHVIKPVVPEKYLDEKTIFHLNPSGRFVIGGPHGDAGLTGRKIIIDTYGGWGAHGGGAFSGKDPTKVDRSGAYIVRQAAKSIVANGLARRCIVQVSYAIGVPDPLSVFVDSYGTGKIPDKEILKIVKENFDFRPGMITINLDLKRGGNDRFLKTAAYGHFGRDDPDFTWEIVKPLKWEKPQS.

Glutamate 9 provides a ligand contact to Mg(2+). An ATP-binding site is contributed by histidine 15. Glutamate 43 provides a ligand contact to K(+). L-methionine-binding residues include glutamate 56 and glutamine 99. Residues 167–169, 235–238, aspartate 246, 252–253, alanine 269, lysine 273, and lysine 277 contribute to the ATP site; these read DGK, SGRF, and RK. Position 246 (aspartate 246) interacts with L-methionine. Residue lysine 277 participates in L-methionine binding.

Belongs to the AdoMet synthase family. As to quaternary structure, homotetramer. The cofactor is Mn(2+). Requires Mg(2+) as cofactor. Co(2+) serves as cofactor. It depends on K(+) as a cofactor.

The protein resides in the cytoplasm. The enzyme catalyses L-methionine + ATP + H2O = S-adenosyl-L-methionine + phosphate + diphosphate. Its pathway is amino-acid biosynthesis; S-adenosyl-L-methionine biosynthesis; S-adenosyl-L-methionine from L-methionine: step 1/1. Its function is as follows. Catalyzes the formation of S-adenosylmethionine from methionine and ATP. The reaction comprises two steps that are both catalyzed by the same enzyme: formation of S-adenosylmethionine (AdoMet) and triphosphate, and subsequent hydrolysis of the triphosphate. The chain is S-adenosylmethionine synthase 2 (SAMS2) from Elaeagnus umbellata (Autumn olive).